We begin with the raw amino-acid sequence, 200 residues long: Large ribosomal subunit protein uL4 (200 aa).

The disordered stretch occupies residues 43-71; sequence RAQKTRAEVSGSGKKPWRQKGTGRARSGD.

The protein belongs to the universal ribosomal protein uL4 family. As to quaternary structure, part of the 50S ribosomal subunit.

Its function is as follows. One of the primary rRNA binding proteins, this protein initially binds near the 5'-end of the 23S rRNA. It is important during the early stages of 50S assembly. It makes multiple contacts with different domains of the 23S rRNA in the assembled 50S subunit and ribosome. Forms part of the polypeptide exit tunnel. The protein is Large ribosomal subunit protein uL4 of Mannheimia succiniciproducens (strain KCTC 0769BP / MBEL55E).